The chain runs to 2833 residues: Reticulocyte-binding protein 1 (2833 aa).

An N-terminal signal peptide occupies residues methionine 1–glycine 22. A compositionally biased stretch (basic and acidic residues) spans glutamate 75–histidine 91. Disordered regions lie at residues glutamate 75–phenylalanine 95, histidine 112–glutamate 133, and lysine 819–arginine 860. The span at lysine 819–serine 836 shows a compositional bias: basic and acidic residues. Residues valine 837–glutamine 849 show a composition bias toward acidic residues. The Cell attachment site signature appears at arginine 2563–aspartate 2565. The disordered stretch occupies residues glutamate 2619–serine 2755. 2 stretches are compositionally biased toward basic and acidic residues: residues asparagine 2621–alanine 2633 and glutamate 2640–valine 2652. The span at methionine 2655 to glutamate 2670 shows a compositional bias: polar residues. A compositionally biased stretch (acidic residues) spans leucine 2706–methionine 2720. The segment covering threonine 2731–asparagine 2742 has biased composition (basic and acidic residues). A compositionally biased stretch (polar residues) spans threonine 2743–serine 2755.

Homodimer.

It is found in the membrane. In terms of biological role, involved in reticulocyte adhesion. Specifically binds to human reticulocyte cells. This Plasmodium vivax (strain Belem) protein is Reticulocyte-binding protein 1 (RBP1).